The primary structure comprises 677 residues: Multicopper oxidase GIP1 (677 aa).

An N-terminal signal peptide occupies residues 1-23; the sequence is MLTSPRLILLLLAWVFSALVASA. Plastocyanin-like domains lie at 31-150 and 179-379; these read ITWE…IRRK and LVMV…RYKG. The N-linked (GlcNAc...) asparagine glycan is linked to asparagine 76. Cu cation contacts are provided by histidine 80, histidine 82, histidine 130, and histidine 132. N-linked (GlcNAc...) asparagine glycosylation is found at asparagine 228, asparagine 283, asparagine 396, and asparagine 478. A Plastocyanin-like 3 domain is found at 469–588; the sequence is DEGLVIRTKN…AGGMAIAILD (120 aa). Histidine 503 is a binding site for Cu cation. N-linked (GlcNAc...) asparagine glycosylation occurs at asparagine 520. The tract at residues 629-651 is disordered; the sequence is PLLAVSPSGGPKKDSGETSASDS.

It belongs to the multicopper oxidase family. As to quaternary structure, might be part of an extracellular enzyme complex composed of GIP1, aurF, aurO and aurS.

The protein localises to the secreted. The protein resides in the extracellular space. It participates in pigment biosynthesis. In terms of biological role, multicopper oxidase; part of the gene cluster that mediates the biosynthesis of aurofusarin, a red mycelium pigment which is acting as a mycotoxin. The first step is performed by the polyketide synthase which condenses one acetyl-CoA and 6 malonyl-CoA units to form the first intermediate, the cyclic heptaketide and yellow pigment YWA1. The C2 hydroxyl group in the pyrone ring of YWA1 is probably formed during ring closure by an aldol-type cyclization reaction. The dehydratase aurZ then acts as the first tailoring enzyme in the aurofusarin biosynthetic pathway by converting YWA1 to nor-rubrofusarin. Nor-rubrofusarin is then methylated to rubrofusarin by the O-methyltransferase aurJ. Rubrofusarin is then transported across the plasma membrane by the rubrofusarin-specific pump aurT for further enzymatic processing by the extracellular complex composed of GIP1, aurF, aurO and aurS to yield aurofusarin. The polypeptide is Multicopper oxidase GIP1 (Gibberella zeae (strain ATCC MYA-4620 / CBS 123657 / FGSC 9075 / NRRL 31084 / PH-1) (Wheat head blight fungus)).